Consider the following 282-residue polypeptide: uncharacterized protein (282 aa).

This is an uncharacterized protein from Escherichia coli (strain K12).